Consider the following 836-residue polypeptide: Serine/threonine-protein kinase ATG1 (836 aa).

The Protein kinase domain maps to 21-321 (YTVEKEIGKG…FNEFFNNEVV (301 aa)). ATP-binding positions include 27-35 (IGKGSFAIV) and K50. Catalysis depends on D168, which acts as the Proton acceptor. Disordered stretches follow at residues 387 to 425 (EHYR…GQTR), 458 to 489 (NNGP…GGRR), and 619 to 642 (CAID…TPGA). Residues 395–404 (LQGQQQQQQQ) are compositionally biased toward low complexity. Composition is skewed to polar residues over residues 411–425 (RGST…GQTR), 459–468 (NGPTTNNQGA), and 630–640 (GNPSSNQTLTP). Residues 571–836 (ITPFVESLSA…RLKALKSKMS (266 aa)) form an interaction with ATG13 region.

It belongs to the protein kinase superfamily. Ser/Thr protein kinase family. APG1/unc-51/ULK1 subfamily. In terms of assembly, homodimer. Dimerization requires the presence of ATG13. Forms a ternary complex with ATG13 and ATG17.

It is found in the cytoplasm. The protein localises to the preautophagosomal structure membrane. It catalyses the reaction L-seryl-[protein] + ATP = O-phospho-L-seryl-[protein] + ADP + H(+). The enzyme catalyses L-threonyl-[protein] + ATP = O-phospho-L-threonyl-[protein] + ADP + H(+). Functionally, serine/threonine protein kinase involved in the cytoplasm to vacuole transport (Cvt) and found to be essential in autophagy, where it is required for the formation of autophagosomes. Involved in the clearance of protein aggregates which cannot be efficiently cleared by the proteasome. Required for selective autophagic degradation of the nucleus (nucleophagy) as well as for mitophagy which contributes to regulate mitochondrial quantity and quality by eliminating the mitochondria to a basal level to fulfill cellular energy requirements and preventing excess ROS production. Also involved in endoplasmic reticulum-specific autophagic process, in selective removal of ER-associated degradation (ERAD) substrates. Plays a key role in ATG9 and ATG23 cycling through the pre-autophagosomal structure and is necessary to promote ATG18 binding to ATG9 through phosphorylation of ATG9. Catalyzes phosphorylation of ATG4, decreasing the interaction between ATG4 and ATG8 and impairing deconjugation of PE-conjugated forms of ATG8. This Kluyveromyces marxianus (strain DMKU3-1042 / BCC 29191 / NBRC 104275) (Yeast) protein is Serine/threonine-protein kinase ATG1.